The primary structure comprises 382 residues: Mannitol-1-phosphate 5-dehydrogenase (382 aa).

NAD(+) is bound at residue 3-14; the sequence is ALHFGAGNIGRG.

It belongs to the mannitol dehydrogenase family.

The catalysed reaction is D-mannitol 1-phosphate + NAD(+) = beta-D-fructose 6-phosphate + NADH + H(+). In Salmonella paratyphi A (strain ATCC 9150 / SARB42), this protein is Mannitol-1-phosphate 5-dehydrogenase.